The chain runs to 982 residues: Ubiquitin carboxyl-terminal hydrolase 15 (982 aa).

Positions 7-118 (VDLETQRSEV…SQQPIARKVV (112 aa)) constitute a DUSP domain. One can recognise a USP domain in the interval 288–933 (CGLSNLGNTC…AAYVLFYQRQ (646 aa)). Cysteine 297 serves as the catalytic Nucleophile. The interval 623–695 (TEENDGSLHC…DNDSENGLCT (73 aa)) is disordered. The span at 655–672 (METDEPDDESSQDQELPS) shows a compositional bias: acidic residues. Histidine 891 functions as the Proton acceptor in the catalytic mechanism. Residues 950-982 (QGASAATGAPHESDEESNEDENDIENENCMHTN) are disordered. Over residues 962–975 (SDEESNEDENDIEN) the composition is skewed to acidic residues.

The protein belongs to the peptidase C19 family.

It is found in the cytoplasm. It localises to the nucleus. The enzyme catalyses Thiol-dependent hydrolysis of ester, thioester, amide, peptide and isopeptide bonds formed by the C-terminal Gly of ubiquitin (a 76-residue protein attached to proteins as an intracellular targeting signal).. Hydrolase that removes conjugated ubiquitin from target proteins and regulates various pathways such as the TGF-beta receptor signaling and NF-kappa-B pathways. Acts as a key regulator of TGF-beta receptor signaling pathway, but the precise mechanism is still unclear: according to a report, acts by promoting deubiquitination of monoubiquitinated R-SMADs, thereby alleviating inhibition of R-SMADs and promoting activation of TGF-beta target genes. According to another reports, regulates the TGF-beta receptor signaling pathway by mediating deubiquitination and stabilization of tgfbr1, leading to an enhanced TGF-beta signal. May also regulate gene expression and/or DNA repair through the deubiquitination of histone H2B. Involved in endosome organization by mediating deubiquitination of rnf26 target(s), releasing vesicles that are restrained in the perinuclear region. This chain is Ubiquitin carboxyl-terminal hydrolase 15 (usp15), found in Xenopus tropicalis (Western clawed frog).